We begin with the raw amino-acid sequence, 231 residues long: Hypoxanthine-guanine-xanthine phosphoribosyltransferase (231 aa).

Residues Lys-77, 144 to 152 (EDIIDTGKT), Lys-176, and Asp-204 contribute to the GMP site. Asp-148 serves as the catalytic Proton acceptor. Asp-204 lines the Mg(2+) pocket.

Belongs to the purine/pyrimidine phosphoribosyltransferase family. Homotetramer. Requires Mg(2+) as cofactor.

Its subcellular location is the cytoplasm. The enzyme catalyses IMP + diphosphate = hypoxanthine + 5-phospho-alpha-D-ribose 1-diphosphate. It catalyses the reaction GMP + diphosphate = guanine + 5-phospho-alpha-D-ribose 1-diphosphate. The catalysed reaction is XMP + diphosphate = xanthine + 5-phospho-alpha-D-ribose 1-diphosphate. Its pathway is purine metabolism; GMP biosynthesis via salvage pathway; GMP from guanine: step 1/1. It participates in purine metabolism; IMP biosynthesis via salvage pathway; IMP from hypoxanthine: step 1/1. It functions in the pathway purine metabolism; XMP biosynthesis via salvage pathway; XMP from xanthine: step 1/1. Its function is as follows. Catalyzes the transfer of a ribosyl phosphate group from 5-phosphoribose 1-diphosphate to the N(9) of hypoxanthine, guanine or xanthine, leading to IMP, GMP and XMP, respectively. Plays a central role in the generation of purine nucleotides through the purine salvage pathway. The sequence is that of Hypoxanthine-guanine-xanthine phosphoribosyltransferase (LACZ) from Plasmodium falciparum (isolate K1 / Thailand).